The chain runs to 369 residues: Anhydro-N-acetylmuramic acid kinase (369 aa).

ATP is bound at residue 12-19 (GTSLDGVD).

This sequence belongs to the anhydro-N-acetylmuramic acid kinase family.

The enzyme catalyses 1,6-anhydro-N-acetyl-beta-muramate + ATP + H2O = N-acetyl-D-muramate 6-phosphate + ADP + H(+). Its pathway is amino-sugar metabolism; 1,6-anhydro-N-acetylmuramate degradation. It functions in the pathway cell wall biogenesis; peptidoglycan recycling. Catalyzes the specific phosphorylation of 1,6-anhydro-N-acetylmuramic acid (anhMurNAc) with the simultaneous cleavage of the 1,6-anhydro ring, generating MurNAc-6-P. Is required for the utilization of anhMurNAc either imported from the medium or derived from its own cell wall murein, and thus plays a role in cell wall recycling. The polypeptide is Anhydro-N-acetylmuramic acid kinase (Escherichia coli O6:K15:H31 (strain 536 / UPEC)).